The following is a 1116-amino-acid chain: Angiopoietin-1 receptor (1116 aa).

The N-terminal stretch at 1–21 (MCLLDSCTALLLLGCWMSGSA) is a signal peptide. The Extracellular segment spans residues 22 to 745 (VRISDVTLVN…FAAHGHLLLY (724 aa)). The cysteines at positions 46 and 106 are disulfide-linked. Residues 46–126 (CVSSDWSSGG…YTYKMLQEAA (81 aa)) enclose the Ig-like C2-type 1 domain. Residues Asn-110, Asn-143, and Asn-223 are each glycosylated (N-linked (GlcNAc...) asparagine). EGF-like domains follow at residues 214-256 (SCRA…HTCD), 258-302 (VCGE…LSCN), and 304-342 (ACPD…SRCE). Cystine bridges form between Cys-215/Cys-224, Cys-228/Cys-237, Cys-231/Cys-244, Cys-246/Cys-255, Cys-259/Cys-268, Cys-272/Cys-277, Cys-283/Cys-290, Cys-292/Cys-301, Cys-305/Cys-314, Cys-318/Cys-325, Cys-320/Cys-331, and Cys-333/Cys-341. An Ig-like C2-type 2 domain is found at 348–438 (PVISHLRDVE…MQVEDEFTVE (91 aa)). N-linked (GlcNAc...) asparagine glycans are attached at residues Asn-367, Asn-387, and Asn-425. Cys-368 and Cys-422 are disulfide-bonded. Fibronectin type-III domains are found at residues 444 to 538 (RPQN…TQVL), 540 to 633 (LPVG…QLPP), and 634 to 729 (PPAN…TLPQ). N-linked (GlcNAc...) asparagine glycosylation is found at Asn-590, Asn-637, and Asn-642. A helical membrane pass occupies residues 746 to 766 (AILGSAGMTCCTVLLAFCIVL). Residues 767–1116 (QLKRNTLQRR…GIDCSAEEAG (350 aa)) lie on the Cytoplasmic side of the membrane. The 280-residue stretch at 816–1095 (IQFQDVLGEG…RMLEERKTYV (280 aa)) folds into the Protein kinase domain. ATP is bound by residues 822–830 (LGEGNFGQV) and Lys-847. Tyr-852 is subject to Phosphotyrosine; by autocatalysis. The Proton acceptor role is filled by Asp-956. 3 positions are modified to phosphotyrosine; by autocatalysis: Tyr-984, Tyr-1094, and Tyr-1100.

This sequence belongs to the protein kinase superfamily. Tyr protein kinase family. Tie subfamily. In terms of assembly, interacts with svep1. In terms of processing, autophosphorylated on tyrosine residues in response to ligand binding. Autophosphorylation occurs in trans, i.e. one subunit of the dimeric receptor phosphorylates tyrosine residues on the other subunit. Autophosphorylation occurs in a sequential manner, where Tyr-984 in the kinase activation loop is phosphorylated first, followed by autophosphorylation at additional tyrosine residues. Phosphorylation is important for interaction with scaffold proteins and effectors.

It is found in the cell membrane. It localises to the cell junction. Its subcellular location is the focal adhesion. The protein localises to the cytoplasm. The protein resides in the cytoskeleton. It carries out the reaction L-tyrosyl-[protein] + ATP = O-phospho-L-tyrosyl-[protein] + ADP + H(+). Its activity is regulated as follows. Angiopoietin binding leads to receptor dimerization and activation by autophosphorylation at Tyr-984 on the kinase activation loop. Functionally, tyrosine-protein kinase that acts as a cell-surface receptor for angiopoietins and regulates angiogenesis, endothelial cell survival, proliferation, migration, adhesion and cell spreading, reorganization of the actin cytoskeleton, but also maintenance of vascular quiescence. Can activate or inhibit angiogenesis, depending on the context. Angiopoietin signaling triggers receptor dimerization and autophosphorylation at specific tyrosine residues that then serve as binding sites for scaffold proteins and effectors. The sequence is that of Angiopoietin-1 receptor from Danio rerio (Zebrafish).